Consider the following 465-residue polypeptide: Cysteine--tRNA ligase (465 aa).

Cysteine 29 contacts Zn(2+). The short motif at proline 31–asparagine 41 is the 'HIGH' region element. 3 residues coordinate Zn(2+): cysteine 209, histidine 234, and glutamate 238. Residues lysine 266 to serine 270 carry the 'KMSKS' region motif. Position 269 (lysine 269) interacts with ATP. At serine 270 the chain carries Phosphoserine.

Belongs to the class-I aminoacyl-tRNA synthetase family. As to quaternary structure, monomer. The cofactor is Zn(2+).

The protein resides in the cytoplasm. It catalyses the reaction tRNA(Cys) + L-cysteine + ATP = L-cysteinyl-tRNA(Cys) + AMP + diphosphate. The sequence is that of Cysteine--tRNA ligase from Bacillus cereus (strain B4264).